We begin with the raw amino-acid sequence, 137 residues long: NADH dehydrogenase [ubiquinone] 1 beta subcomplex subunit 7 (137 aa).

The N-myristoyl glycine moiety is linked to residue Gly-2. The CHCH domain maps to 56-98 (RDYCAHYLIRFLKCKRDSFPNFLACKHERHDWDYCEHLDYVKR). The Cx9C motif 1 signature appears at 59–69 (CAHYLIRFLKC). Intrachain disulfides connect Cys-59/Cys-90 and Cys-69/Cys-80. Ser-73 is modified (phosphoserine). Positions 80-90 (CKHERHDWDYC) match the Cx9C motif 2 motif. Residues 110 to 137 (QRKKRREQREADMAKGLGPGEVAPEVAL) are disordered.

The protein belongs to the complex I NDUFB7 subunit family. In terms of assembly, complex I is composed of 45 different subunits.

It localises to the mitochondrion inner membrane. The protein localises to the mitochondrion intermembrane space. Accessory subunit of the mitochondrial membrane respiratory chain NADH dehydrogenase (Complex I), that is believed not to be involved in catalysis. Complex I functions in the transfer of electrons from NADH to the respiratory chain. The immediate electron acceptor for the enzyme is believed to be ubiquinone. In Bos taurus (Bovine), this protein is NADH dehydrogenase [ubiquinone] 1 beta subcomplex subunit 7 (NDUFB7).